Consider the following 711-residue polypeptide: MYWVLLCGSILLCCLSGASASPAKTKMYGKLPLVLTDACMGVLGEVTWEYSSDDLYSSPACTYEPALQSMLYCIYESLNEKGYSNRTFEKTFAAIKEDCAYYTDNLQNMTNADFYNMLNNGTTYIIQYSEGSANLTYPIEMDAQVRENYYYSYHGFYANYDIGHTYGGIICAYFVGVMILASILHYLSYTPFKTALFKQRLVRYVRRYLTIPTIWGKHASSFSYLKIFTGFLPTRSEGVIILGYLVLHTVFLAYGYQYDPYNLIFDSRREQIARYVADRSGVLAFAHFPLIALFAGRNNFLEFISGVKYTSFIMFHKWLGRMMFLDAVIHGAAYTSYSVFYKDWAASKEETYWQFGVAALCIVGVMVFFSLAMFRKFFYEAFLFLHIVLGALFFYTCWEHVVELSGIEWIYAAIAIWTIDRLIRIVRVSYFGFPKASLQLVGDDIIRVTVKRPVRLWKAKPGQYVFVSFLHHLYFWQSHPFTVLDSIIKDGELTIILKEKKGVTKLVKKYVCCNGGKASMRLAIEGPYGSSSPVNNYDNVLLLTGGTGLPGPIAHAIKLGKTSAATGKQFIKLVIAVRGFNVLEAYKPELMCLEDLNVQLHIYNTMEVPALTPNDSLEISQQDEKADGKGVVMATTLEQSPNPVEFDGTVFHHGRPNVEKLLHEVGDLNGSLAVVCCGPPVFVDEVRDQTANLVLEKPAKAIEYFEEYQSW.

Residues 1–20 (MYWVLLCGSILLCCLSGASA) form the signal peptide. Topologically, residues 21–166 (SPAKTKMYGK…YANYDIGHTY (146 aa)) are extracellular. N-linked (GlcNAc...) asparagine glycans are attached at residues Asn-85, Asn-108, Asn-120, and Asn-134. The helical transmembrane segment at 167-187 (GGIICAYFVGVMILASILHYL) threads the bilayer. Residues 188–237 (SYTPFKTALFKQRLVRYVRRYLTIPTIWGKHASSFSYLKIFTGFLPTRSE) are Cytoplasmic-facing. A helical transmembrane segment spans residues 238–258 (GVIILGYLVLHTVFLAYGYQY). Topologically, residues 259–280 (DPYNLIFDSRREQIARYVADRS) are extracellular. A Ferric oxidoreductase domain is found at 280–414 (SGVLAFAHFP…SGIEWIYAAI (135 aa)). Residues 281 to 301 (GVLAFAHFPLIALFAGRNNFL) traverse the membrane as a helical segment. The Cytoplasmic portion of the chain corresponds to 302–321 (EFISGVKYTSFIMFHKWLGR). The heme site is built by His-316 and His-330. A helical membrane pass occupies residues 322–341 (MMFLDAVIHGAAYTSYSVFY). The Extracellular portion of the chain corresponds to 342–353 (KDWAASKEETYW). A helical transmembrane segment spans residues 354-374 (QFGVAALCIVGVMVFFSLAMF). Residues 375 to 376 (RK) are Cytoplasmic-facing. A helical transmembrane segment spans residues 377-397 (FFYEAFLFLHIVLGALFFYTC). Position 386 (His-386) interacts with heme. A topological domain (extracellular) is located at residue Trp-398. The chain crosses the membrane as a helical span at residues 399-419 (EHVVELSGIEWIYAAIAIWTI). His-400 provides a ligand contact to heme. Residues 415–534 (AIWTIDRLIR…EGPYGSSSPV (120 aa)) enclose the FAD-binding FR-type domain. The Cytoplasmic portion of the chain corresponds to 420–711 (DRLIRIVRVS…IEYFEEYQSW (292 aa)). 479-485 (HPFTVLD) contributes to the FAD binding site. NADP(+)-binding positions include 526 to 529 (GPYG) and 677 to 678 (CG).

This sequence belongs to the ferric reductase (FRE) family. FAD serves as cofactor. It depends on heme as a cofactor.

The protein localises to the cell membrane. It catalyses the reaction 2 a Fe(II)-siderophore + NADP(+) + H(+) = 2 a Fe(III)-siderophore + NADPH. Its function is as follows. Siderophore-iron reductase responsible for reducing extracellular iron prior to import. Catalyzes the reductive uptake of Fe(3+) bound to di- and trihydroxamate siderophores. Fe(3+) is reduced to Fe(2+), which then dissociates from the siderophore and can be imported by the high-affinity Fe(2+) transport complex in the plasma membrane. This chain is Ferric reductase transmembrane component 3 (FRE3), found in Saccharomyces cerevisiae (strain ATCC 204508 / S288c) (Baker's yeast).